The following is a 100-amino-acid chain: Proline-rich protein 15-like protein (100 aa).

The segment at 29 to 51 (YAQTEGGAEPPGPDAGDPHSDFN) is disordered.

Belongs to the PRR15 family.

This Mus musculus (Mouse) protein is Proline-rich protein 15-like protein (Prr15l).